The primary structure comprises 96 residues: Co-chaperonin GroES (96 aa).

This sequence belongs to the GroES chaperonin family. Heptamer of 7 subunits arranged in a ring. Interacts with the chaperonin GroEL.

Its subcellular location is the cytoplasm. Its function is as follows. Together with the chaperonin GroEL, plays an essential role in assisting protein folding. The GroEL-GroES system forms a nano-cage that allows encapsulation of the non-native substrate proteins and provides a physical environment optimized to promote and accelerate protein folding. GroES binds to the apical surface of the GroEL ring, thereby capping the opening of the GroEL channel. In Alteromonas mediterranea (strain DSM 17117 / CIP 110805 / LMG 28347 / Deep ecotype), this protein is Co-chaperonin GroES.